An 842-amino-acid polypeptide reads, in one-letter code: Non-motile and phage-resistance protein (842 aa).

Helical transmembrane passes span 29–50 (VFVR…AFGV), 283–303 (GAFS…LLMI), and 343–363 (VYLS…VVSG). Positions 318–389 (SERRFRLAVE…QALANAAMYG (72 aa)) constitute a PAS domain. The region spanning 607–830 (NMSHELRTPL…TVSFTLPVRH (224 aa)) is the Histidine kinase domain. H610 carries the phosphohistidine; by autocatalysis modification.

The protein localises to the cell membrane. It catalyses the reaction ATP + protein L-histidine = ADP + protein N-phospho-L-histidine.. Its function is as follows. Member of the two-component regulatory system involved in the regulation of polar organelle development. PleC functions as a membrane-associated protein kinase that transfers phosphate to the response regulator PleD, leading to its activation. This chain is Non-motile and phage-resistance protein (pleC), found in Caulobacter vibrioides (strain ATCC 19089 / CIP 103742 / CB 15) (Caulobacter crescentus).